The following is a 734-amino-acid chain: Sulfate transporter (734 aa).

Polar residues predominate over residues 1–11 (MSLKNGEQNDL). The disordered stretch occupies residues 1 to 38 (MSLKNGEQNDLSPKDSVKGNDQYRSPSGIHVEHEEESR). A phosphoserine mark is found at serine 12 and serine 16. Helical transmembrane passes span 113-133 (MMSG…YSLL) and 138-158 (PIYG…LGTS). Asparagine 194 and asparagine 204 each carry an N-linked (GlcNAc...) asparagine glycan. 8 helical membrane passes run 222–242 (FVAG…VSVY), 247–267 (LLGG…VKYL), 269–289 (GLSL…IHIF), 292–312 (IHKT…VLLP), 379–399 (VDAI…SEMF), 415–435 (AIGF…SAAL), 453–473 (VMTA…FFSL), and 519–539 (LIST…CVIL). Positions 563–714 (AYKNLQAKSG…YSVYEAMTFA (152 aa)) constitute an STAS domain.

The protein belongs to the SLC26A/SulP transporter (TC 2.A.53) family. In terms of processing, N-glycosylated.

Its subcellular location is the cell membrane. It localises to the apical cell membrane. The catalysed reaction is oxalate(in) + sulfate(out) = oxalate(out) + sulfate(in). The enzyme catalyses sulfate(out) + 2 chloride(in) = sulfate(in) + 2 chloride(out). It carries out the reaction oxalate(out) + 2 chloride(in) = oxalate(in) + 2 chloride(out). It catalyses the reaction bromide(in) + chloride(out) = bromide(out) + chloride(in). The catalysed reaction is nitrate(in) + chloride(out) = nitrate(out) + chloride(in). The enzyme catalyses iodide(in) + chloride(out) = iodide(out) + chloride(in). Functionally, sulfate transporter which mediates sulfate uptake into chondrocytes in order to maintain adequate sulfation of proteoglycans which is needed for cartilage development. Mediates electroneutral anion exchange of sulfate ions for oxalate ions, sulfate and oxalate ions for chloride and/or hydroxyl ions and chloride ions for bromide, iodide and nitrate ions. The coupling of sulfate transport to both hydroxyl and chloride ions likely serves to ensure transport at both acidic pH when most sulfate uptake is mediated by sulfate-hydroxide exchange and alkaline pH when most sulfate uptake is mediated by sulfate-chloride exchange. Essential for chondrocyte proliferation, differentiation and cell size expansion. The polypeptide is Sulfate transporter (SLC26A2) (Ovis aries (Sheep)).